Here is an 882-residue protein sequence, read N- to C-terminus: Alanine--tRNA ligase (882 aa).

Zn(2+) is bound by residues His570, His574, Cys672, and His676.

It belongs to the class-II aminoacyl-tRNA synthetase family. The cofactor is Zn(2+).

Its subcellular location is the cytoplasm. It catalyses the reaction tRNA(Ala) + L-alanine + ATP = L-alanyl-tRNA(Ala) + AMP + diphosphate. Functionally, catalyzes the attachment of alanine to tRNA(Ala) in a two-step reaction: alanine is first activated by ATP to form Ala-AMP and then transferred to the acceptor end of tRNA(Ala). Also edits incorrectly charged Ser-tRNA(Ala) and Gly-tRNA(Ala) via its editing domain. This is Alanine--tRNA ligase from Xanthomonas axonopodis pv. citri (strain 306).